The primary structure comprises 161 residues: Large ribosomal subunit protein uL16 (161 aa).

Positions 140 to 161 (LNKGNYKPAKTPVTADDSESSS) are disordered.

Belongs to the universal ribosomal protein uL16 family. As to quaternary structure, part of the 50S ribosomal subunit.

Binds 23S rRNA and is also seen to make contacts with the A and possibly P site tRNAs. The sequence is that of Large ribosomal subunit protein uL16 from Prochlorococcus marinus (strain NATL1A).